Consider the following 276-residue polypeptide: Diaminopimelate epimerase (276 aa).

Positions 13, 46, and 66 each coordinate substrate. C75 (proton donor) is an active-site residue. Substrate-binding positions include 76–77, N159, N192, and 210–211; these read GN and ER. C219 (proton acceptor) is an active-site residue. 220–221 lines the substrate pocket; it reads GT.

It belongs to the diaminopimelate epimerase family. As to quaternary structure, homodimer.

The protein resides in the cytoplasm. The enzyme catalyses (2S,6S)-2,6-diaminopimelate = meso-2,6-diaminopimelate. It participates in amino-acid biosynthesis; L-lysine biosynthesis via DAP pathway; DL-2,6-diaminopimelate from LL-2,6-diaminopimelate: step 1/1. Functionally, catalyzes the stereoinversion of LL-2,6-diaminopimelate (L,L-DAP) to meso-diaminopimelate (meso-DAP), a precursor of L-lysine and an essential component of the bacterial peptidoglycan. This chain is Diaminopimelate epimerase, found in Stutzerimonas stutzeri (strain A1501) (Pseudomonas stutzeri).